The primary structure comprises 177 residues: Interleukin-19 (177 aa).

The first 24 residues, 1–24, serve as a signal peptide directing secretion; it reads MKLQCVSLWLLGTILILCSVDNHG. Intrachain disulfides connect C28/C121, C75/C127, and C76/C129. N56 carries an N-linked (GlcNAc...) asparagine glycan. N135 carries an N-linked (GlcNAc...) asparagine glycan.

The protein belongs to the IL-10 family.

It is found in the secreted. Cytokine that functions as an anti-inflammatory and proangiogenic factor. Polarizes adaptive immunity to an anti-inflammatory phenotype through induction of T-helper 2 responses by both down-regulation of IFN-gamma and up-regulation of IL4 and IL13. Produced by osteocytes, stimulates granulopoiesis and neutrophil formation. Exerts its biological effect through a receptor complex consisting of a heterodimer of IL20RA and IL20RB. In turn, activates the Janus kinase (JAK) and signal transducer and activator of transcription (STAT) pathway, and importantly, STAT3. This chain is Interleukin-19 (IL19), found in Homo sapiens (Human).